The primary structure comprises 274 residues: 3-methyl-2-oxobutanoate hydroxymethyltransferase (274 aa).

Mg(2+) contacts are provided by Asp-46 and Asp-85. 3-methyl-2-oxobutanoate is bound by residues Asp-46 to Ser-47, Asp-85, and Lys-114. Position 116 (Glu-116) interacts with Mg(2+). Glu-183 serves as the catalytic Proton acceptor.

It belongs to the PanB family. Homodecamer; pentamer of dimers. Requires Mg(2+) as cofactor.

The protein resides in the cytoplasm. The enzyme catalyses 3-methyl-2-oxobutanoate + (6R)-5,10-methylene-5,6,7,8-tetrahydrofolate + H2O = 2-dehydropantoate + (6S)-5,6,7,8-tetrahydrofolate. The protein operates within cofactor biosynthesis; coenzyme A biosynthesis. Functionally, catalyzes the reversible reaction in which hydroxymethyl group from 5,10-methylenetetrahydrofolate is transferred onto alpha-ketoisovalerate to form ketopantoate. This Aeropyrum pernix (strain ATCC 700893 / DSM 11879 / JCM 9820 / NBRC 100138 / K1) protein is 3-methyl-2-oxobutanoate hydroxymethyltransferase.